The following is a 218-amino-acid chain: PKHD-type hydroxylase Sala_1910 (218 aa).

Residues 74 to 172 (RIAPPLLTRY…RLVAITFIQS (99 aa)) enclose the Fe2OG dioxygenase domain. The Fe cation site is built by histidine 92, aspartate 94, and histidine 153. Arginine 163 lines the 2-oxoglutarate pocket.

Fe(2+) is required as a cofactor. The cofactor is L-ascorbate.

The sequence is that of PKHD-type hydroxylase Sala_1910 from Sphingopyxis alaskensis (strain DSM 13593 / LMG 18877 / RB2256) (Sphingomonas alaskensis).